Consider the following 253-residue polypeptide: MICOS complex subunit mic25-b (253 aa).

G2 is lipidated: N-myristoyl glycine. Positions 38 to 82 (KDQSTWAASGAASGSATVPSKVGSSASHPAAASKDGAHKPTAAGV) are disordered. Positions 44–53 (AASGAASGSA) are enriched in low complexity. The stretch at 87–116 (AEEDLYRRYEREQTLIQEELARLAKREKDA) forms a coiled coil. One can recognise a CHCH domain in the interval 206 to 248 (DPVCMDLQSNILKCYAENKQERLNCSDLAKEYQKCVSAAQKNL). Short sequence motifs (cx9C motif) lie at residues 209–219 (CMDLQSNILKC) and 230–240 (CSDLAKEYQKC). Disulfide bonds link C209/C240 and C219/C230.

Belongs to the MICOS complex subunit Mic19 family. Metazoan Mic25 subfamily. In terms of assembly, component of the mitochondrial contact site and cristae organizing system (MICOS) complex (also known as MINOS or MitOS complex).

It localises to the mitochondrion inner membrane. In terms of biological role, component of the MICOS complex, a large protein complex of the mitochondrial inner membrane that plays crucial roles in the maintenance of crista junctions, inner membrane architecture, and formation of contact sites to the outer membrane. This chain is MICOS complex subunit mic25-b (chchd6-b), found in Xenopus laevis (African clawed frog).